A 38-amino-acid polypeptide reads, in one-letter code: MTQSNPNEQSVELNRTSLYWGLLLIFVLAVLFSSYFFN.

A helical transmembrane segment spans residues 17–37 (SLYWGLLLIFVLAVLFSSYFF).

The protein belongs to the PsbL family. PSII is composed of 1 copy each of membrane proteins PsbA, PsbB, PsbC, PsbD, PsbE, PsbF, PsbH, PsbI, PsbJ, PsbK, PsbL, PsbM, PsbT, PsbX, PsbY, PsbZ, Psb30/Ycf12, at least 3 peripheral proteins of the oxygen-evolving complex and a large number of cofactors. It forms dimeric complexes.

The protein localises to the plastid. The protein resides in the chloroplast thylakoid membrane. One of the components of the core complex of photosystem II (PSII). PSII is a light-driven water:plastoquinone oxidoreductase that uses light energy to abstract electrons from H(2)O, generating O(2) and a proton gradient subsequently used for ATP formation. It consists of a core antenna complex that captures photons, and an electron transfer chain that converts photonic excitation into a charge separation. This subunit is found at the monomer-monomer interface and is required for correct PSII assembly and/or dimerization. This Ephedra sinica (Chinese ephedra) protein is Photosystem II reaction center protein L.